Consider the following 336-residue polypeptide: MKDRYILAFETSCDETSVAVLKNDDELLSNVIASQIESHKRFGGVVPEVASRHHVEVITACIEEALAEAGITEEDVTAVAVTYGPGLVGALLVGLSAAKAFAWAHGLPLIPVNHMAGHLMAAQSVEPLEFPLLALLVSGGHTELVYVSEAGDYKIVGETRDDAVGEAYDKVGRVMGLTYPAGREIDELAHQGQDIYDFPRAMIKEDNLEFSFSGLKSAFINLHHNAEQKGESLSTEDLCASFQAAVMDILMAKTKKALEKYPVKTLVVAGGVAANKGLRERLAAEITDVKVIIPPLRLCGDNAGMIAYASVSEWNKENFAGWDLNAKPSLAFDTME.

Fe cation contacts are provided by His-114 and His-118. Residues 136–140, Asp-169, Gly-182, Asp-186, and Asn-275 each bind substrate; that span reads LVSGG. Asp-301 contacts Fe cation.

This sequence belongs to the KAE1 / TsaD family. Requires Fe(2+) as cofactor.

The protein localises to the cytoplasm. It catalyses the reaction L-threonylcarbamoyladenylate + adenosine(37) in tRNA = N(6)-L-threonylcarbamoyladenosine(37) in tRNA + AMP + H(+). Its function is as follows. Required for the formation of a threonylcarbamoyl group on adenosine at position 37 (t(6)A37) in tRNAs that read codons beginning with adenine. Is involved in the transfer of the threonylcarbamoyl moiety of threonylcarbamoyl-AMP (TC-AMP) to the N6 group of A37, together with TsaE and TsaB. TsaD likely plays a direct catalytic role in this reaction. The polypeptide is tRNA N6-adenosine threonylcarbamoyltransferase (Streptococcus pneumoniae (strain JJA)).